Reading from the N-terminus, the 209-residue chain is Large ribosomal subunit protein uL3 (209 aa).

The interval 127–164 (NFSGGQRTHGQSDRLRAPGSVGGASDPSRTFKGTKMGG) is disordered.

This sequence belongs to the universal ribosomal protein uL3 family. Part of the 50S ribosomal subunit. Forms a cluster with proteins L14 and L19.

One of the primary rRNA binding proteins, it binds directly near the 3'-end of the 23S rRNA, where it nucleates assembly of the 50S subunit. The sequence is that of Large ribosomal subunit protein uL3 from Chlorobium phaeobacteroides (strain BS1).